The following is a 736-amino-acid chain: Subtilisin-like protease SBT4.6 (736 aa).

The N-terminal stretch at 1–24 is a signal peptide; sequence MATAVSYCLLSCIFALLVVSFASA. The propeptide at 25 to 111 is activation peptide; it reads GKDDQDKQVY…VFPSKNLNLQ (87 aa). One can recognise an Inhibitor I9 domain in the interval 33-110; the sequence is VYIVYMGALP…SVFPSKNLNL (78 aa). In terms of domain architecture, Peptidase S8 spans 115-589; that stretch reads SWNFMGLKEG…AGHVDPIAAI (475 aa). Catalysis depends on aspartate 143, which acts as the Charge relay system. The N-linked (GlcNAc...) asparagine glycan is linked to asparagine 174. Catalysis depends on histidine 204, which acts as the Charge relay system. The N-linked (GlcNAc...) asparagine glycan is linked to asparagine 227. Positions 362–442 constitute a PA domain; that stretch reads KYPLVYGKSA…PVSVLSEDDY (81 aa). N-linked (GlcNAc...) asparagine glycosylation occurs at asparagine 450. The active-site Charge relay system is serine 527. Asparagine 564, asparagine 598, asparagine 610, and asparagine 668 each carry an N-linked (GlcNAc...) asparagine glycan.

The protein belongs to the peptidase S8 family. In terms of processing, the C-terminal propeptide is autocleaved.

Its subcellular location is the secreted. The polypeptide is Subtilisin-like protease SBT4.6 (Arabidopsis thaliana (Mouse-ear cress)).